We begin with the raw amino-acid sequence, 80 residues long: Acyl carrier protein (80 aa).

A Carrier domain is found at 4–79 (QEIFEKVKAV…DAVEYIKAKL (76 aa)). O-(pantetheine 4'-phosphoryl)serine is present on Ser-39.

This sequence belongs to the acyl carrier protein (ACP) family. In terms of processing, 4'-phosphopantetheine is transferred from CoA to a specific serine of apo-ACP by AcpS. This modification is essential for activity because fatty acids are bound in thioester linkage to the sulfhydryl of the prosthetic group.

Its subcellular location is the cytoplasm. It functions in the pathway lipid metabolism; fatty acid biosynthesis. Its function is as follows. Carrier of the growing fatty acid chain in fatty acid biosynthesis. This Thermus thermophilus (strain ATCC BAA-163 / DSM 7039 / HB27) protein is Acyl carrier protein.